A 255-amino-acid chain; its full sequence is 4-hydroxy-tetrahydrodipicolinate reductase (255 aa).

Residues 9 to 14 (GFKGKM), D35, 89 to 91 (GTT), and 115 to 118 (APNF) contribute to the NAD(+) site. The active-site Proton donor/acceptor is the H145. H146 lines the (S)-2,3,4,5-tetrahydrodipicolinate pocket. The active-site Proton donor is K149. (S)-2,3,4,5-tetrahydrodipicolinate is bound at residue 155–156 (GT).

Belongs to the DapB family.

The protein resides in the cytoplasm. The enzyme catalyses (S)-2,3,4,5-tetrahydrodipicolinate + NAD(+) + H2O = (2S,4S)-4-hydroxy-2,3,4,5-tetrahydrodipicolinate + NADH + H(+). It catalyses the reaction (S)-2,3,4,5-tetrahydrodipicolinate + NADP(+) + H2O = (2S,4S)-4-hydroxy-2,3,4,5-tetrahydrodipicolinate + NADPH + H(+). It functions in the pathway amino-acid biosynthesis; L-lysine biosynthesis via DAP pathway; (S)-tetrahydrodipicolinate from L-aspartate: step 4/4. Catalyzes the conversion of 4-hydroxy-tetrahydrodipicolinate (HTPA) to tetrahydrodipicolinate. The polypeptide is 4-hydroxy-tetrahydrodipicolinate reductase (Streptococcus pneumoniae (strain 70585)).